The primary structure comprises 252 residues: Expansin-A12 (252 aa).

The signal sequence occupies residues 1-23 (MDMKGTYLVTVILLVSTLSVGMC). An Expansin-like EG45 domain is found at 45-156 (GGACGYDNPY…RRVGCKRRGG (112 aa)). The Expansin-like CBD domain occupies 166–246 (NFNMVMISNV…SWWFGQTFSS (81 aa)).

The protein belongs to the expansin family. Expansin A subfamily.

It is found in the secreted. The protein localises to the cell wall. It localises to the membrane. In terms of biological role, causes loosening and extension of plant cell walls by disrupting non-covalent bonding between cellulose microfibrils and matrix glucans. No enzymatic activity has been found. The chain is Expansin-A12 (EXPA12) from Arabidopsis thaliana (Mouse-ear cress).